Here is a 1023-residue protein sequence, read N- to C-terminus: Sodium/potassium-transporting ATPase subunit alpha-1 (1023 aa).

The propeptide occupies 1-5; it reads MAFKV. Over residues 1 to 11 the composition is skewed to basic and acidic residues; the sequence is MAFKVGRDKYE. The segment at 1–38 is disordered; that stretch reads MAFKVGRDKYEPAAVSEQGDKKGKKGKKDRDMDELKKE. Residues 6–87 are Cytoplasmic-facing; the sequence is GRDKYEPAAV…NALTPPPTTP (82 aa). Lys9 carries the post-translational modification N6-acetyllysine. Tyr10 is modified (phosphotyrosine). A Phosphoserine; by PKC modification is found at Ser16. Residue Lys21 is modified to N6-acetyllysine. Residues 28–38 show a composition bias toward basic and acidic residues; that stretch reads KDRDMDELKKE. Phosphoserine occurs at positions 40 and 47. Residues 82–84 are phosphoinositide-3 kinase binding; it reads PPP. A helical membrane pass occupies residues 88–108; sequence EWIKFCRQLFGGFSMLLWIGA. The Extracellular portion of the chain corresponds to 109 to 131; it reads ILCFLAYSIQAATEEEPQNDNLY. A helical membrane pass occupies residues 132–152; that stretch reads LGVVLSAVVIITGCFSYYQEA. Residues 153–288 are Cytoplasmic-facing; that stretch reads KSSKIMESFK…GGQTPIAAEI (136 aa). The tract at residues 216–235 is disordered; that stretch reads SSLTGESEPQTRSPDFTNEN. The residue at position 228 (Ser228) is a Phosphoserine. Position 260 is a phosphotyrosine (Tyr260). The helical transmembrane segment at 289 to 308 threads the bilayer; that stretch reads EHFIHIITGVAVFLGVSFFI. The Extracellular segment spans residues 309–320; sequence LSLILEYTWLEA. A helical membrane pass occupies residues 321–338; it reads VIFLIGIIVANVPEGLLA. Residues 339–772 lie on the Cytoplasmic side of the membrane; the sequence is TVTVCLTLTA…EEGRLIFDNL (434 aa). Asp376 acts as the 4-aspartylphosphate intermediate in catalysis. Ser452 and Ser484 each carry phosphoserine. Position 487 (Lys487) interacts with ATP. Tyr542 is subject to Phosphotyrosine. Residues 596-717 are mediates interaction with SCN7A; that stretch reads RAAVPDAVGK…QGAIVAVTGD (122 aa). Lys661 is subject to N6-succinyllysine. Residues Ser668 and Ser675 each carry the phosphoserine modification. Mg(2+) is bound by residues Asp717 and Asp721. Residues 773-792 traverse the membrane as a helical segment; the sequence is KKSIAYTLTSNIPEITPFLI. The Extracellular portion of the chain corresponds to 793–802; the sequence is FIIANIPLPL. Residues 803–823 traverse the membrane as a helical segment; it reads GTVTILCIDLGTDMVPAISLA. The Cytoplasmic segment spans residues 824–843; the sequence is YEQAESDIMKRQPRNPKTDK. A helical transmembrane segment spans residues 844–866; that stretch reads LVNERLISTAYGQIGMIQALGGF. Topologically, residues 867–918 are extracellular; it reads FTYFVILAENGFLPLHLLGLRVDWDDRWINDVEDSYGQQWTYEQRKIVEFTC. The chain crosses the membrane as a helical span at residues 919–938; it reads HTAFFVSIVVVQWADLVICK. Residues 939-951 lie on the Cytoplasmic side of the membrane; that stretch reads TRRNSVFQQGMKN. Ser943 bears the Phosphoserine; by PKA mark. Residues 952–970 traverse the membrane as a helical segment; the sequence is KILIFGLFEETALAAFLSY. Over 971–985 the chain is Extracellular; sequence CPGMGVALRMYPLKP. A helical membrane pass occupies residues 986–1006; it reads TWWFCAFPYSLLIFVYDEVRK. The Cytoplasmic segment spans residues 1007 to 1023; the sequence is LIIRRRPGGWVEKETYY.

This sequence belongs to the cation transport ATPase (P-type) (TC 3.A.3) family. Type IIC subfamily. As to quaternary structure, the sodium/potassium-transporting ATPase is composed of a catalytic alpha subunit, an auxiliary non-catalytic beta subunit and an additional regulatory subunit. Interacts with regulatory subunit FXYD1. Interacts with regulatory subunit FXYD3. Interacts with SIK1. Interacts with SLC35G1 and STIM1. Interacts with CLN3; this interaction regulates the sodium/potassium-transporting ATPase complex localization at the plasma membrane. Interacts with SCN7A; activates ATP1A1 P-type sodium:potassium-exchanging transporter activity which indirectly signals to nearby neurons to regulate sodium homeostasis. Post-translationally, phosphorylation on Tyr-10 modulates pumping activity. Phosphorylation of Ser-943 by PKA modulates the response of ATP1A1 to PKC. Dephosphorylation by protein phosphatase 2A (PP2A) following increases in intracellular sodium, leading to increase catalytic activity.

Its subcellular location is the cell membrane. The protein localises to the basolateral cell membrane. The protein resides in the sarcolemma. It is found in the cell projection. It localises to the axon. Its subcellular location is the melanosome. It carries out the reaction K(+)(out) + Na(+)(in) + ATP + H2O = K(+)(in) + Na(+)(out) + ADP + phosphate + H(+). In terms of biological role, this is the catalytic component of the active enzyme, which catalyzes the hydrolysis of ATP coupled with the exchange of sodium and potassium ions across the plasma membrane. This action creates the electrochemical gradient of sodium and potassium ions, providing the energy for active transport of various nutrients. Could also be part of an osmosensory signaling pathway that senses body-fluid sodium levels and controls salt intake behavior as well as voluntary water intake to regulate sodium homeostasis. The protein is Sodium/potassium-transporting ATPase subunit alpha-1 (ATP1A1) of Pongo abelii (Sumatran orangutan).